The chain runs to 363 residues: Histidinol-phosphate aminotransferase (363 aa).

Lys-226 carries the post-translational modification N6-(pyridoxal phosphate)lysine.

Belongs to the class-II pyridoxal-phosphate-dependent aminotransferase family. Histidinol-phosphate aminotransferase subfamily. Homodimer. Pyridoxal 5'-phosphate serves as cofactor.

The catalysed reaction is L-histidinol phosphate + 2-oxoglutarate = 3-(imidazol-4-yl)-2-oxopropyl phosphate + L-glutamate. It functions in the pathway amino-acid biosynthesis; L-histidine biosynthesis; L-histidine from 5-phospho-alpha-D-ribose 1-diphosphate: step 7/9. This Campylobacter lari (strain RM2100 / D67 / ATCC BAA-1060) protein is Histidinol-phosphate aminotransferase.